A 67-amino-acid chain; its full sequence is Probable archaeal histone 3 (67 aa).

Interaction with DNA stretches follow at residues 20–22 (RVS) and 54–57 (KTVK).

This sequence belongs to the archaeal histone HMF family. In terms of assembly, homodimer or heterodimer with another histone. Dimers then assemble into higher oligomers, with the DNA wrapped around the protein core.

It is found in the cytoplasm. Its subcellular location is the chromosome. Its function is as follows. Binds and compact DNA (95 to 150 base pairs) to form nucleosome-like structures that contain positive DNA supercoils. Increases the resistance of DNA to thermal denaturation (in vitro). This is Probable archaeal histone 3 from Methanocaldococcus jannaschii (strain ATCC 43067 / DSM 2661 / JAL-1 / JCM 10045 / NBRC 100440) (Methanococcus jannaschii).